The sequence spans 361 residues: dTDP-glucose 4,6-dehydratase 1 (361 aa).

NAD(+) is bound by residues 11–12 (FI), 32–35 (DKLT), 58–59 (DI), 80–84 (LAAES), and T99. Position 84 (S84) interacts with substrate. T133 contributes to the substrate binding site. Residue D134 is the Proton donor of the active site. Catalysis depends on proton acceptor residues E135 and Y167. 167–171 (YSASK) lines the NAD(+) pocket. Residue N196 participates in substrate binding. N197 contributes to the NAD(+) binding site. Residues 206 to 207 (KL), 222 to 224 (PIY), R231, N266, and 296 to 300 (DRPGH) each bind substrate.

The protein belongs to the NAD(P)-dependent epimerase/dehydratase family. dTDP-glucose dehydratase subfamily. Homodimer. It depends on NAD(+) as a cofactor.

The catalysed reaction is dTDP-alpha-D-glucose = dTDP-4-dehydro-6-deoxy-alpha-D-glucose + H2O. It functions in the pathway carbohydrate biosynthesis; dTDP-L-rhamnose biosynthesis. The protein operates within bacterial outer membrane biogenesis; LPS O-antigen biosynthesis. In terms of biological role, catalyzes the dehydration of dTDP-D-glucose to form dTDP-6-deoxy-D-xylo-4-hexulose via a three-step process involving oxidation, dehydration and reduction. This Escherichia coli (strain K12) protein is dTDP-glucose 4,6-dehydratase 1 (rfbB).